Consider the following 894-residue polypeptide: Microsomal triglyceride transfer protein large subunit (894 aa).

A signal peptide spans 1 to 18 (MILLAVLFLCFISSYSAS). In terms of domain architecture, Vitellogenin spans 28-659 (LNNDRLYKLT…IFQYIGKAGL (632 aa)). The cysteines at positions 174 and 194 are disulfide-linked.

Heterodimer; heterodimerizes with the protein disulfide isomerase (P4HB/PDI). Interacts with APOB. Interacts with PRAP1. In terms of tissue distribution, liver and small intestine. Also found in ovary, testis and kidney.

It is found in the endoplasmic reticulum. Its subcellular location is the golgi apparatus. The catalysed reaction is a 1,2-diacyl-sn-glycero-3-phosphocholine(in) = a 1,2-diacyl-sn-glycero-3-phosphocholine(out). The enzyme catalyses a 1,2-diacyl-sn-glycero-3-phosphoethanolamine(in) = a 1,2-diacyl-sn-glycero-3-phosphoethanolamine(out). It catalyses the reaction a cholesterol ester(in) = a cholesterol ester(out). It carries out the reaction a triacyl-sn-glycerol(in) = a triacyl-sn-glycerol(out). In terms of biological role, catalyzes the transport of triglyceride, cholesteryl ester, and phospholipid between phospholipid surfaces. Required for the assembly and secretion of plasma lipoproteins that contain apolipoprotein B. May be involved in regulating cholesteryl ester biosynthesis in cells that produce lipoproteins. The chain is Microsomal triglyceride transfer protein large subunit (MTTP) from Homo sapiens (Human).